The chain runs to 146 residues: Putative pre-16S rRNA nuclease (146 aa).

It belongs to the YqgF nuclease family.

It localises to the cytoplasm. Could be a nuclease involved in processing of the 5'-end of pre-16S rRNA. In Mycoplasmopsis pulmonis (strain UAB CTIP) (Mycoplasma pulmonis), this protein is Putative pre-16S rRNA nuclease.